A 359-amino-acid chain; its full sequence is Guanine nucleotide-binding protein G(o) subunit alpha (359 aa).

Residues 1-26 form a disordered region; sequence MGGCVSATPEEREAKTRSSVIDRQQR. G2 is lipidated: N-myristoyl glycine. C4 is lipidated: S-palmitoyl cysteine. Residues 34-359 enclose the G-alpha domain; that stretch reads NTIKILLLGA…RENLEAANLL (326 aa). The G1 motif stretch occupies residues 37–50; that stretch reads KILLLGAGESGKST. GTP is bound by residues 42 to 49, 178 to 184, 203 to 207, 272 to 275, and A331; these read GAGESGKS, LRSRVQT, DVGGQ, and NKAD. S49 and T184 together coordinate Mg(2+). The segment at 176-184 is G2 motif; sequence DVLRSRVQT. A G3 motif region spans residues 199 to 208; it reads YRVVDVGGQR. Residues 268 to 275 form a G4 motif region; sequence ILFLNKAD. The G5 motif stretch occupies residues 329 to 334; the sequence is TTATDT.

Belongs to the G-alpha family. G(i/o/t/z) subfamily. G proteins are composed of 3 units; alpha, beta and gamma. The alpha chain contains the guanine nucleotide binding site.

Guanine nucleotide-binding proteins (G proteins) are involved as modulators or transducers in various transmembrane signaling systems. The G(o) protein function is not clear. This is Guanine nucleotide-binding protein G(o) subunit alpha from Geodia cydonium (Sponge).